A 78-amino-acid polypeptide reads, in one-letter code: Large ribosomal subunit protein eL20 (78 aa).

Belongs to the eukaryotic ribosomal protein eL20 family. Part of the 50S ribosomal subunit. Binds 23S rRNA.

The sequence is that of Large ribosomal subunit protein eL20 from Pyrobaculum islandicum (strain DSM 4184 / JCM 9189 / GEO3).